The sequence spans 180 residues: UPF0102 protein Tery_0733 (180 aa).

The protein belongs to the UPF0102 family.

The polypeptide is UPF0102 protein Tery_0733 (Trichodesmium erythraeum (strain IMS101)).